A 308-amino-acid chain; its full sequence is uncharacterized protein (308 aa).

The ABC transporter domain occupies 6–234 (LHIEGLDKKI…TEKAIIEVQP (229 aa)). 38 to 45 (GPNGSGKT) contributes to the ATP binding site.

Belongs to the ABC transporter superfamily.

This is an uncharacterized protein from Bacillus subtilis (strain 168).